The sequence spans 53 residues: Large ribosomal subunit protein eL40 (53 aa).

The protein belongs to the eukaryotic ribosomal protein eL40 family.

The sequence is that of Large ribosomal subunit protein eL40 from Pyrobaculum aerophilum (strain ATCC 51768 / DSM 7523 / JCM 9630 / CIP 104966 / NBRC 100827 / IM2).